We begin with the raw amino-acid sequence, 184 residues long: MSNSKPLSLTDAVTTWYMKKLKSKPIQTKALTSATLSFISSVVAQKFIEKKKINWNAVVKFTVWGLISSPLVHYWHIILDRLFKNIKDKYQSWGKLIVDQLVFAPFINIAFYSVLAILDGKPKSILFKLYFDLFPTLKASWKVWPLAQLINFRFVPSHLRVLFGNLVGFCWGIYLSILATKKRN.

The first 44 residues, 1 to 44, serve as a signal peptide directing secretion; that stretch reads MSNSKPLSLTDAVTTWYMKKLKSKPIQTKALTSATLSFISSVVA. 3 helical membrane-spanning segments follow: residues 58-78, 97-117, and 159-179; these read VVKFTVWGLISSPLVHYWHII, IVDQLVFAPFINIAFYSVLAI, and LRVLFGNLVGFCWGIYLSILA.

The protein belongs to the peroxisomal membrane protein PXMP2/4 family.

It localises to the membrane. This chain is PXMP2/4 family protein 3, found in Dictyostelium discoideum (Social amoeba).